Reading from the N-terminus, the 651-residue chain is Mediator of RNA polymerase II transcription subunit 17 (651 aa).

Residues 51–83 (QGSGSEEEEAAGAEGDAQDWAGAGSSADQDDEE) form a disordered region. The segment covering 62–74 (GAEGDAQDWAGAG) has biased composition (low complexity).

This sequence belongs to the Mediator complex subunit 17 family. In terms of assembly, component of the Mediator complex, which is composed of MED1, MED4, MED6, MED7, MED8, MED9, MED10, MED11, MED12, MED13, MED13L, MED14, MED15, MED16, MED17, MED18, MED19, MED20, MED21, MED22, MED23, MED24, MED25, MED26, MED27, MED29, MED30, MED31, CCNC, CDK8 and CDC2L6/CDK11. The MED12, MED13, CCNC and CDK8 subunits form a distinct module termed the CDK8 module. Mediator containing the CDK8 module is less active than Mediator lacking this module in supporting transcriptional activation. Individual preparations of the Mediator complex lacking one or more distinct subunits have been variously termed ARC, CRSP, DRIP, PC2, SMCC and TRAP. Interacts with GATA1, PPARG and STAT2.

The protein resides in the nucleus. Functionally, component of the Mediator complex, a coactivator involved in the regulated transcription of nearly all RNA polymerase II-dependent genes. Mediator functions as a bridge to convey information from gene-specific regulatory proteins to the basal RNA polymerase II transcription machinery. Mediator is recruited to promoters by direct interactions with regulatory proteins and serves as a scaffold for the assembly of a functional preinitiation complex with RNA polymerase II and the general transcription factors. The protein is Mediator of RNA polymerase II transcription subunit 17 (MED17) of Bos taurus (Bovine).